We begin with the raw amino-acid sequence, 539 residues long: Putative cysteine ligase BshC (539 aa).

Residues 455-475 (LQKNAAFIQDQLLFLERTVTK) adopt a coiled-coil conformation.

Belongs to the BshC family.

In terms of biological role, involved in bacillithiol (BSH) biosynthesis. May catalyze the last step of the pathway, the addition of cysteine to glucosamine malate (GlcN-Mal) to generate BSH. In Bacillus velezensis (strain DSM 23117 / BGSC 10A6 / LMG 26770 / FZB42) (Bacillus amyloliquefaciens subsp. plantarum), this protein is Putative cysteine ligase BshC.